Reading from the N-terminus, the 471-residue chain is Argininosuccinate lyase (471 aa).

The protein belongs to the lyase 1 family. Argininosuccinate lyase subfamily.

The protein resides in the cytoplasm. It catalyses the reaction 2-(N(omega)-L-arginino)succinate = fumarate + L-arginine. It functions in the pathway amino-acid biosynthesis; L-arginine biosynthesis; L-arginine from L-ornithine and carbamoyl phosphate: step 3/3. The sequence is that of Argininosuccinate lyase from Ralstonia pickettii (strain 12J).